We begin with the raw amino-acid sequence, 404 residues long: tRNA-specific 2-thiouridylase MnmA (404 aa).

ATP-binding positions include 42–49 (GLSGGVDS) and leucine 68. Cysteine 129 (nucleophile) is an active-site residue. The cysteines at positions 129 and 239 are disulfide-linked. An ATP-binding site is contributed by glycine 154. Residues 189–191 (KDQ) form an interaction with tRNA region. Residue cysteine 239 is the Cysteine persulfide intermediate of the active site. Residues 344–345 (RY) are interaction with tRNA.

The protein belongs to the MnmA/TRMU family.

The protein localises to the cytoplasm. It carries out the reaction S-sulfanyl-L-cysteinyl-[protein] + uridine(34) in tRNA + AH2 + ATP = 2-thiouridine(34) in tRNA + L-cysteinyl-[protein] + A + AMP + diphosphate + H(+). Its function is as follows. Catalyzes the 2-thiolation of uridine at the wobble position (U34) of tRNA, leading to the formation of s(2)U34. The sequence is that of tRNA-specific 2-thiouridylase MnmA from Prochlorococcus marinus (strain NATL1A).